The chain runs to 711 residues: Putative membrane protein ActII-3 (711 aa).

12 consecutive transmembrane segments (helical) span residues 14-34, 175-195, 199-219, 235-255, 281-301, 313-333, 369-389, 516-536, 540-560, 573-593, 623-643, and 645-665; these read LKWL…PLAG, ADFK…VVTY, LLWL…QAIV, AMIL…LLVA, AIVA…LAAL, VGVL…LVIF, AVWV…VTLN, IIPV…RALV, LLIA…ALFF, FPLW…IFLV, AGLV…VFIA, and LGFT…SVLV. The tract at residues 685–711 is disordered; the sequence is REDPSEDPAVSGMPDSIDSEASTTASR.

This sequence belongs to the resistance-nodulation-cell division (RND) (TC 2.A.6) family. MmpL subfamily.

The protein resides in the cell membrane. This chain is Putative membrane protein ActII-3 (actII-3), found in Streptomyces coelicolor (strain ATCC BAA-471 / A3(2) / M145).